We begin with the raw amino-acid sequence, 276 residues long: NH(3)-dependent NAD(+) synthetase (276 aa).

43 to 50 (GISGGVDS) serves as a coordination point for ATP. Asp49 contributes to the Mg(2+) binding site. Arg146 contributes to the deamido-NAD(+) binding site. Thr166 contacts ATP. Glu171 contacts Mg(2+). Deamido-NAD(+)-binding residues include Lys179 and Asp186. ATP is bound by residues Lys195 and Thr217. A deamido-NAD(+)-binding site is contributed by 266-267 (HK).

This sequence belongs to the NAD synthetase family. Homodimer.

The catalysed reaction is deamido-NAD(+) + NH4(+) + ATP = AMP + diphosphate + NAD(+) + H(+). It participates in cofactor biosynthesis; NAD(+) biosynthesis; NAD(+) from deamido-NAD(+) (ammonia route): step 1/1. Its function is as follows. Catalyzes the ATP-dependent amidation of deamido-NAD to form NAD. Uses ammonia as a nitrogen source. The polypeptide is NH(3)-dependent NAD(+) synthetase (Vibrio vulnificus (strain CMCP6)).